The sequence spans 79 residues: Small ribosomal subunit protein bS16c (79 aa).

It belongs to the bacterial ribosomal protein bS16 family.

It is found in the plastid. Its subcellular location is the chloroplast. The protein is Small ribosomal subunit protein bS16c of Trieres chinensis (Marine centric diatom).